The primary structure comprises 230 residues: Ion-translocating oxidoreductase complex subunit E (230 aa).

6 helical membrane-spanning segments follow: residues 18–38 (ALVQLLGMCPLLAVTSTATNA), 39–59 (LGLGLATTLVLTLTNLTISAL), 63–83 (TPAEIRIPIYVMIIASVVSAV), 86–106 (LINAYAFGLYQSLGIFIPLIV), 125–145 (ALSALDGFSIGMGATGAMFVL), and 182–202 (PFLLAMLPPGAFIGLGLMLAV).

The protein belongs to the NqrDE/RnfAE family. In terms of assembly, the complex is composed of six subunits: RnfA, RnfB, RnfC, RnfD, RnfE and RnfG.

The protein resides in the cell inner membrane. Its function is as follows. Part of a membrane-bound complex that couples electron transfer with translocation of ions across the membrane. The protein is Ion-translocating oxidoreductase complex subunit E of Citrobacter koseri (strain ATCC BAA-895 / CDC 4225-83 / SGSC4696).